A 115-amino-acid chain; its full sequence is Replication initiation control protein YabA (115 aa).

Zn(2+) is bound by residues histidine 85, cysteine 87, cysteine 101, and cysteine 104.

The protein belongs to the YabA family. Homotetramer. Interacts with both DnaA and DnaN, acting as a bridge between these two proteins. Zn(2+) is required as a cofactor.

It localises to the cytoplasm. Its subcellular location is the nucleoid. Functionally, involved in control of chromosome replication initiation. Inhibits the cooperative binding of DnaA to the oriC region, thus negatively regulating initiation of chromosome replication. Inhibits the ability of DnaA-ATP to form a helix on DNA; does not disassemble preformed DnaA-DNA helices. Decreases the residence time of DnaA on the chromosome at its binding sites (oriC, replication forks and promoter-binding sites). Tethers DnaA to the replication machinery via the DNA polymerase beta sliding clamp subunit (dnaN). Associates with oriC and other DnaA targets on the chromosome in a DnaA-dependent manner. In Lactiplantibacillus plantarum (strain ATCC BAA-793 / NCIMB 8826 / WCFS1) (Lactobacillus plantarum), this protein is Replication initiation control protein YabA.